The chain runs to 340 residues: Phosphatidylglycerol--prolipoprotein diacylglyceryl transferase (340 aa).

The next 4 membrane-spanning stretches (helical) occupy residues 19–39 (IPLR…VWLG), 54–74 (ADIA…YHVI), 93–113 (IWEG…GAWI), and 119–139 (GIPL…AQAF). Residue R141 coordinates a 1,2-diacyl-sn-glycero-3-phospho-(1'-sn-glycerol). A run of 3 helical transmembrane segments spans residues 176–196 (HPTF…VIWA), 202–221 (LGHG…GRAW), and 238–258 (LNDW…VLSS). The segment at 266–340 (EIVEPGASDT…ESAAESAKKV (75 aa)) is disordered. Over residues 284–294 (DLGKDEDKATT) the composition is skewed to basic and acidic residues. The segment covering 295–307 (DKATATDTSTTTD) has biased composition (low complexity). Positions 326-340 (PSEKTESAAESAKKV) are enriched in basic and acidic residues.

It belongs to the Lgt family.

Its subcellular location is the cell membrane. It catalyses the reaction L-cysteinyl-[prolipoprotein] + a 1,2-diacyl-sn-glycero-3-phospho-(1'-sn-glycerol) = an S-1,2-diacyl-sn-glyceryl-L-cysteinyl-[prolipoprotein] + sn-glycerol 1-phosphate + H(+). It participates in protein modification; lipoprotein biosynthesis (diacylglyceryl transfer). Its function is as follows. Catalyzes the transfer of the diacylglyceryl group from phosphatidylglycerol to the sulfhydryl group of the N-terminal cysteine of a prolipoprotein, the first step in the formation of mature lipoproteins. This chain is Phosphatidylglycerol--prolipoprotein diacylglyceryl transferase, found in Streptomyces avermitilis (strain ATCC 31267 / DSM 46492 / JCM 5070 / NBRC 14893 / NCIMB 12804 / NRRL 8165 / MA-4680).